The primary structure comprises 328 residues: Phosphate acyltransferase (328 aa).

It belongs to the PlsX family. As to quaternary structure, homodimer. Probably interacts with PlsY.

It is found in the cytoplasm. The catalysed reaction is a fatty acyl-[ACP] + phosphate = an acyl phosphate + holo-[ACP]. The protein operates within lipid metabolism; phospholipid metabolism. Catalyzes the reversible formation of acyl-phosphate (acyl-PO(4)) from acyl-[acyl-carrier-protein] (acyl-ACP). This enzyme utilizes acyl-ACP as fatty acyl donor, but not acyl-CoA. The chain is Phosphate acyltransferase from Mycoplasma genitalium (strain ATCC 33530 / DSM 19775 / NCTC 10195 / G37) (Mycoplasmoides genitalium).